Consider the following 525-residue polypeptide: GMP synthase [glutamine-hydrolyzing] (525 aa).

A Glutamine amidotransferase type-1 domain is found at 9-207; sequence RILILDFGSQ…VRDICQCEAL (199 aa). Cysteine 86 (nucleophile) is an active-site residue. Residues histidine 181 and glutamate 183 contribute to the active site. Residues 208-400 form the GMPS ATP-PPase domain; that stretch reads WTPAKIIDDA…LGLPYDMLYR (193 aa). 235–241 contacts ATP; sequence SGGVDSS.

Homodimer.

The catalysed reaction is XMP + L-glutamine + ATP + H2O = GMP + L-glutamate + AMP + diphosphate + 2 H(+). The protein operates within purine metabolism; GMP biosynthesis; GMP from XMP (L-Gln route): step 1/1. Its function is as follows. Catalyzes the synthesis of GMP from XMP. This Shigella boydii serotype 18 (strain CDC 3083-94 / BS512) protein is GMP synthase [glutamine-hydrolyzing].